Consider the following 653-residue polypeptide: Large subunit GTPase 1 homolog (653 aa).

The segment at 1 to 47 (MGKKRGTGLGRSLQRQRGSERRGASSWLHASEVVGESGPERRSAVEQ) is disordered. Positions 155–439 (WRQLWRVIER…LCDCPGLVMP (285 aa)) constitute a CP-type G domain. A GTP-binding site is contributed by 203–206 (NKAD). The span at 248 to 275 (ADSVADDLSDSEEESSSQEEDVTAEDSA) shows a compositional bias: acidic residues. Residues 248-323 (ADSVADDLSD…TCSEDEGGDK (76 aa)) form a disordered region. Residues 276–291 (ESTSTGSALQTENQCL) are compositionally biased toward polar residues. Over residues 293 to 320 (SDDDSSDEYEDCEDEEEDDWQTCSEDEG) the composition is skewed to acidic residues. Residues 388–395 (GYPNVGKS) and 432–435 (DCPG) contribute to the GTP site. The disordered stretch occupies residues 621 to 653 (APSAGSVVGKPWKKHGNRNKKEKVRRITKHLEN). Residues 631–653 (PWKKHGNRNKKEKVRRITKHLEN) are compositionally biased toward basic residues.

The protein belongs to the TRAFAC class YlqF/YawG GTPase family. LSG1 subfamily.

It is found in the cytoplasm. The protein localises to the endoplasmic reticulum. The protein resides in the nucleus. It localises to the cajal body. It catalyses the reaction GTP + H2O = GDP + phosphate + H(+). Functionally, GTPase required for the XPO1/CRM1-mediated nuclear export of the 60S ribosomal subunit. Probably acts by mediating the release of NMD3 from the 60S ribosomal subunit after export into the cytoplasm. In terms of biological role, functions as a GTPase. May act by mediating the release of NMD3 from the 60S ribosomal subunit after export into the cytoplasm during the 60S ribosomal subunit maturation. This Gallus gallus (Chicken) protein is Large subunit GTPase 1 homolog.